A 385-amino-acid polypeptide reads, in one-letter code: MSDFIFCYDSFVKGYLCEYIKEVNKKYRFYLTKKSYIKIIFKYISDLKYLVVNFNDSIKFMKFIVKKDIHCDLKYHGHYKCQSLKNYATYFKYIVQNKCLENIRVFFGRFIPVVKLQSGISRVIDESPKKLFGNIVIDIEIIKTIFKYGPLSETESIIEYMLQTTPNLTDEFANDIIAIYKRKIIKYLDTNNDDNTHINEKFHFPNFLIMAYKNDDVYLFNFINDDFFQIVDDLNNIDKTKLNKKQLRTLELFNYKYKLNNQSINSIILPNLIRNDYVKLVKYFCPKIFKELITGFGNFSLLNELILENILIYNNLEYMEIICECIEHTNPELVNKLLPSSRSVEMAQLLIDHGADYEAFYYSNTFILSNISVKKHVAKLVREIL.

This sequence belongs to the mimivirus L17x/L18x family.

This is an uncharacterized protein from Acanthamoeba polyphaga mimivirus (APMV).